We begin with the raw amino-acid sequence, 927 residues long: E3 ubiquitin-protein ligase HOS1 (927 aa).

The segment at 53 to 93 adopts an RING-type; degenerate zinc-finger fold; sequence CRATRDLASCGRFVNYVLNPCGHASLCTECCQRCDVCPICR. Disordered stretches follow at residues 678–699, 782–806, and 832–927; these read SGQF…LPDA, FKDL…SPEV, and VKSS…FAAR. Over residues 797–806 the composition is skewed to basic and acidic residues; that stretch reads KRTEESSPEV. Polar residues-rich tracts occupy residues 832–851 and 878–892; these read VKSS…STFF and NNNN…NNSG. Residues 917-927 are compositionally biased toward basic residues; the sequence is KGRRRRRFAAR.

Interacts with SCRM/ICE1, FLK and MSI4/FVE. Ubiquitously expressed with higher levels in leaf vasculature, roots and root tips.

It is found in the nucleus. Its subcellular location is the cytoplasm. The enzyme catalyses S-ubiquitinyl-[E2 ubiquitin-conjugating enzyme]-L-cysteine + [acceptor protein]-L-lysine = [E2 ubiquitin-conjugating enzyme]-L-cysteine + N(6)-ubiquitinyl-[acceptor protein]-L-lysine.. The protein operates within protein modification; protein ubiquitination. Functionally, E3 ubiquitin-protein ligase that mediates ubiquitination and subsequent proteasomal degradation of the transcription factor ICE1. Acts as a negative regulator of cold signaling pathways. Probably involved in recruiting the NUP107-160 subcomplex of the nuclear pore complex to chromatin. Controls flowering time in response to ambient temperatures (16 and 23 degrees Celsius) and intermittent cold, probably via the regulation of FT and TSF levels. In Arabidopsis thaliana (Mouse-ear cress), this protein is E3 ubiquitin-protein ligase HOS1 (HOS1).